Reading from the N-terminus, the 267-residue chain is Putative hydro-lyase RALTA_B1245 (267 aa).

It belongs to the D-glutamate cyclase family.

This Cupriavidus taiwanensis (strain DSM 17343 / BCRC 17206 / CCUG 44338 / CIP 107171 / LMG 19424 / R1) (Ralstonia taiwanensis (strain LMG 19424)) protein is Putative hydro-lyase RALTA_B1245.